Reading from the N-terminus, the 167-residue chain is SsrA-binding protein (167 aa).

The segment covering 139–158 has biased composition (basic and acidic residues); the sequence is QNHDKRDAAKERDWQRDKQR. The interval 139–167 is disordered; that stretch reads QNHDKRDAAKERDWQRDKQRVMRRHNRDA.

The protein belongs to the SmpB family.

Its subcellular location is the cytoplasm. Functionally, required for rescue of stalled ribosomes mediated by trans-translation. Binds to transfer-messenger RNA (tmRNA), required for stable association of tmRNA with ribosomes. tmRNA and SmpB together mimic tRNA shape, replacing the anticodon stem-loop with SmpB. tmRNA is encoded by the ssrA gene; the 2 termini fold to resemble tRNA(Ala) and it encodes a 'tag peptide', a short internal open reading frame. During trans-translation Ala-aminoacylated tmRNA acts like a tRNA, entering the A-site of stalled ribosomes, displacing the stalled mRNA. The ribosome then switches to translate the ORF on the tmRNA; the nascent peptide is terminated with the 'tag peptide' encoded by the tmRNA and targeted for degradation. The ribosome is freed to recommence translation, which seems to be the essential function of trans-translation. This chain is SsrA-binding protein, found in Xanthomonas oryzae pv. oryzae (strain MAFF 311018).